Reading from the N-terminus, the 195-residue chain is Pyridoxal 5'-phosphate synthase subunit PdxT (195 aa).

Position 46 to 48 (46 to 48 (GES)) interacts with L-glutamine. The active-site Nucleophile is the cysteine 78. Residues arginine 107 and 136–137 (IR) contribute to the L-glutamine site. Active-site charge relay system residues include histidine 173 and glutamate 175.

The protein belongs to the glutaminase PdxT/SNO family. In the presence of PdxS, forms a dodecamer of heterodimers. Only shows activity in the heterodimer.

The enzyme catalyses aldehydo-D-ribose 5-phosphate + D-glyceraldehyde 3-phosphate + L-glutamine = pyridoxal 5'-phosphate + L-glutamate + phosphate + 3 H2O + H(+). It carries out the reaction L-glutamine + H2O = L-glutamate + NH4(+). It functions in the pathway cofactor biosynthesis; pyridoxal 5'-phosphate biosynthesis. Its function is as follows. Catalyzes the hydrolysis of glutamine to glutamate and ammonia as part of the biosynthesis of pyridoxal 5'-phosphate. The resulting ammonia molecule is channeled to the active site of PdxS. The chain is Pyridoxal 5'-phosphate synthase subunit PdxT from Dehalococcoides mccartyi (strain ATCC BAA-2266 / KCTC 15142 / 195) (Dehalococcoides ethenogenes (strain 195)).